Consider the following 217-residue polypeptide: TPA-induced transmembrane protein (217 aa).

The interval 1–37 (MDLAQPSQPVDELELSVLERQPEENTPLNGADKVFPS) is disordered. Residues 66–86 (LWMIITSIFLGVITVIIIGLC) form a helical membrane-spanning segment.

In terms of assembly, interacts with LIPH. Detected predominantly in the skin, with strongest expression in the inner root sheath of the hair follicle.

Its subcellular location is the endoplasmic reticulum. The protein localises to the cell membrane. Has a role in LIPH-mediated synthesis of 2-acyl lysophosphatidic acid (LPA). LPA is a bioactive lipid mediator involved in different biological processes, and necessary to promote hair formation and growth. This is TPA-induced transmembrane protein (TTMP) from Homo sapiens (Human).